The primary structure comprises 713 residues: Undecaprenyl-diphosphooligosaccharide--protein glycotransferase (713 aa).

Over 1 to 11 (MLKKEYLKNPY) the chain is Cytoplasmic. The helical transmembrane segment at 12–35 (LVLFAMIVLAYVFSVFCRFYWVWW) threads the bilayer. Residues 36–96 (ASEFNEYFFN…YWLYKITPFS (61 aa)) are Periplasmic-facing. The short motif at 52 to 54 (SND) is the DXD motif 1 element. A Mn(2+)-binding site is contributed by Asp54. A helical transmembrane segment spans residues 97–122 (FESIILYMSTFLSSLVVIPIILLANE). The Cytoplasmic segment spans residues 123–125 (YKR). Residues 126-144 (PLMGFVAALLASVANSYYN) traverse the membrane as a helical segment. Topologically, residues 145 to 152 (RTMSGYYD) are periplasmic. Residue Asp152 participates in Mn(2+) binding. A DXD motif 2 motif is present at residues 152 to 154 (DTD). A helical membrane pass occupies residues 153-174 (TDMLVIVLPMFILFFMVRMILK). The Cytoplasmic segment spans residues 175-176 (KD). The helical transmembrane segment at 177–192 (FFSLIALPLFIGIYLW) threads the bilayer. The Periplasmic portion of the chain corresponds to 193–197 (WYPSS). 194-196 (YPS) is a [alpha-D-GalNAc-(1-&gt;4)]2-[beta-D-Glc-(1-&gt;3)]-[alpha-D-GalNAc-(1-&gt;4)]2-alpha-D-GalNAc-(1-&gt;3)-alpha-D-diNAcBac-tri-trans,hepta-cis-undecaprenyl diphosphate binding site. The chain crosses the membrane as a helical span at residues 198–215 (YTLNVALIGLFLIYTLIF). Topologically, residues 216 to 220 (HRKEK) are cytoplasmic. A helical transmembrane segment spans residues 221 to 233 (IFYIAVILSSLTL). The Periplasmic portion of the chain corresponds to 234–237 (SNIA). A helical membrane pass occupies residues 238–254 (WFYQSAIIVILFALFAL). The Cytoplasmic portion of the chain corresponds to 255–260 (EQKRLN). The chain crosses the membrane as a helical span at residues 261-278 (FMIIGILGSATLIFLILS). At 279–324 (GGVDPILYQLKFYIFRSDESANLTQGFMYFNVNQTIQEVENVDFSE) the chain is on the periplasmic side. Position 291 (Tyr291) interacts with [alpha-D-GalNAc-(1-&gt;4)]2-[beta-D-Glc-(1-&gt;3)]-[alpha-D-GalNAc-(1-&gt;4)]2-alpha-D-GalNAc-(1-&gt;3)-alpha-D-diNAcBac-tri-trans,hepta-cis-undecaprenyl diphosphate. The TIXE motif signature appears at 313-316 (TIQE). Glu316 is a Mn(2+) binding site. A helical membrane pass occupies residues 325–347 (FMRRISGSEIVFLFSLFGFVWLL). At 348–352 (RKHKS) the chain is on the cytoplasmic side. Residues 353–369 (MIMALPILVLGFLALKG) traverse the membrane as a helical segment. Over 370–373 (GLRF) the chain is Periplasmic. Arg372 provides a ligand contact to [alpha-D-GalNAc-(1-&gt;4)]2-[beta-D-Glc-(1-&gt;3)]-[alpha-D-GalNAc-(1-&gt;4)]2-alpha-D-GalNAc-(1-&gt;3)-alpha-D-diNAcBac-tri-trans,hepta-cis-undecaprenyl diphosphate. Residues 374-396 (TIYSVPVMALGFGFLLSEFKAIL) form a helical membrane-spanning segment. Residues 397-406 (VKKYSQLTSN) are Cytoplasmic-facing. The chain crosses the membrane as a helical span at residues 407-427 (VCIVFATILTLAPVFIHIYNY). Residues 428-713 (KAPTVFSQNE…RDAKVFKLKI (286 aa)) lie on the Periplasmic side of the membrane. The interval 457-459 (WWD) is interacts with target acceptor peptide in protein substrate. The WWDYG motif signature appears at 457 to 461 (WWDYG). Tyr462 contacts [alpha-D-GalNAc-(1-&gt;4)]2-[beta-D-Glc-(1-&gt;3)]-[alpha-D-GalNAc-(1-&gt;4)]2-alpha-D-GalNAc-(1-&gt;3)-alpha-D-diNAcBac-tri-trans,hepta-cis-undecaprenyl diphosphate. A glycan (N-linked (DATDGlc) asparagine) is linked at Asn534. The MI motif signature appears at 568–575 (MSLIFSTV).

The protein belongs to the STT3 family. It depends on Mg(2+) as a cofactor. Requires Mn(2+) as cofactor.

The protein resides in the cell inner membrane. It catalyses the reaction tritrans,heptacis-undecaprenyl diphosphooligosaccharide + [protein]-L-asparagine = tritrans,heptacis-undecaprenyl diphosphate + a glycoprotein with the oligosaccharide chain attached by N-beta-D-glycosyl linkage to protein L-asparagine.. Its pathway is protein modification; protein glycosylation. Functionally, oligosaccharyl transferase (OST) that catalyzes the initial transfer of a defined glycan (GalNAc(2)GlcGalNAc(3)Bac(NAc)(2) in eubacteria, where Bac(NAc)(2) is di-N-acetyl bacillosamine) from the lipid carrier undecaprenol-pyrophosphate to an asparagine residue within an Asp/Glu-Asn-X-Ser/Thr consensus motif in nascent polypeptide chains, the first step in protein N-glycosylation. In Campylobacter jejuni subsp. jejuni serotype O:2 (strain ATCC 700819 / NCTC 11168), this protein is Undecaprenyl-diphosphooligosaccharide--protein glycotransferase (pglB).